A 310-amino-acid polypeptide reads, in one-letter code: Probable mitochondrial import receptor subunit TOM40-2 (310 aa).

At Met-1 the chain carries N-acetylmethionine.

The protein belongs to the Tom40 family. As to quaternary structure, forms part of the preprotein translocase complex of the outer mitochondrial membrane (TOM complex) which consists of at least 6 different proteins (TOM5, TOM6, TOM7, TOM20, TOM22/TOM9 and TOM40). Present in a large lipid-enriched complex called mitochondrial transmembrane lipoprotein (MTL) complex made of proteins located in the two mitochondrial membranes, including the TOM complex and the core components of the MICOS complex and containing at least digalactosyldiacylglycerol (DGDG). Binds to MIC60. Component of a mitochondrial large protein complex that contains, at least, MIC60, DGS1, TOM40, TOM20 proteins, and petC/RISP. Expressed in roots, flowers, young cotyledons and leaves.

It is found in the mitochondrion outer membrane. Functionally, central component of the receptor complex responsible for the recognition and translocation of cytosolically synthesized mitochondrial preproteins. Together with TOM22 functions as the transit peptide receptor at the surface of the mitochondrion outer membrane and facilitates the movement of preproteins into the translocation pore. Directly involved in the pore formation. This is Probable mitochondrial import receptor subunit TOM40-2 from Arabidopsis thaliana (Mouse-ear cress).